Reading from the N-terminus, the 635-residue chain is Probable potassium transport system protein Kup (635 aa).

12 helical membrane passes run 20–40 (MALVIGAIGVVFGDIGTSPLY), 62–82 (VLSLAFWALMITVTLKYVTII), 111–131 (AYVVGILGIFGASLFFGDGVI), 149–169 (PSLHPFIVPITVVVLLVVFMV), 180–200 (VFGPITCLWFLSLGAIGIWNI), 223–243 (GWHGVFILGAVVLAVTGGEAL), 259–279 (WYFFVLPMLLLNYLGQGALVL), 292–312 (AVPSWALYPMIILATLAAVIA), 349–369 (IYVPGINWLLMVMVIALVLIF), 377–397 (VAYGISVSMTMLIDTLLLALV), 408–428 (WVLPLCVVFFIIELAFVIANG), and 429–449 (AKLLQGAWFPLALGIVVFTLM).

Belongs to the HAK/KUP transporter (TC 2.A.72) family.

It is found in the cell inner membrane. It carries out the reaction K(+)(in) + H(+)(in) = K(+)(out) + H(+)(out). Transport of potassium into the cell. Likely operates as a K(+):H(+) symporter. This chain is Probable potassium transport system protein Kup, found in Xanthomonas campestris pv. campestris (strain 8004).